Here is a 77-residue protein sequence, read N- to C-terminus: Tautomerase PptA (77 aa).

Residue Pro2 is the Proton acceptor; via imino nitrogen of the active site.

This sequence belongs to the 4-oxalocrotonate tautomerase family. PptA subfamily. Homodimer.

The protein resides in the cytoplasm. The polypeptide is Tautomerase PptA (Escherichia coli (strain K12 / MC4100 / BW2952)).